We begin with the raw amino-acid sequence, 103 residues long: Small ribosomal subunit protein uS10 (103 aa).

Belongs to the universal ribosomal protein uS10 family. Part of the 30S ribosomal subunit.

Its function is as follows. Involved in the binding of tRNA to the ribosomes. In Helicobacter hepaticus (strain ATCC 51449 / 3B1), this protein is Small ribosomal subunit protein uS10.